The chain runs to 1153 residues: Cytosolic carboxypeptidase 1 (1153 aa).

The interval Asn-357 to Glu-400 is disordered. Residues Asp-364–Asp-389 are compositionally biased toward acidic residues. A Peptidase M14 domain is found at Tyr-774 to Arg-1063. Zn(2+)-binding residues include His-845, Glu-848, and His-942. Glu-1027 serves as the catalytic Proton donor/acceptor. A compositionally biased stretch (acidic residues) spans Ala-1108–Glu-1128. The tract at residues Ala-1108 to Thr-1153 is disordered. Polar residues predominate over residues Ser-1141–Thr-1153.

The protein belongs to the peptidase M14 family. Requires Zn(2+) as cofactor.

The protein localises to the cytoplasm. Its subcellular location is the cytosol. It localises to the nucleus. It is found in the mitochondrion. It carries out the reaction (L-glutamyl)(n+1)-gamma-L-glutamyl-L-glutamyl-[protein] + H2O = (L-glutamyl)(n)-gamma-L-glutamyl-L-glutamyl-[protein] + L-glutamate. The catalysed reaction is C-terminal L-alpha-aminoacyl-L-glutamyl-L-glutamyl-[tubulin] + H2O = C-terminal L-alpha-aminoacyl-L-glutamyl-[tubulin] + L-glutamate. Its function is as follows. Metallocarboxypeptidase that mediates protein deglutamylation of tubulin and non-tubulin target proteins. Catalyzes the removal of polyglutamate side chains present on the gamma-carboxyl group of glutamate residues within the C-terminal tail of alpha- and beta-tubulin. Specifically cleaves tubulin long-side-chains, while it is not able to remove the branching point glutamate. Also catalyzes the removal of polyglutamate residues from the carboxy-terminus of alpha-tubulin as well as non-tubulin proteins. This is Cytosolic carboxypeptidase 1 (agtpbp1) from Danio rerio (Zebrafish).